Reading from the N-terminus, the 359-residue chain is Peptide chain release factor 1 (359 aa).

Gln236 is modified (N5-methylglutamine). Residues 288-307 (QDEQDAERKSTIGTGDRSER) form a disordered region. Positions 293-307 (AERKSTIGTGDRSER) are enriched in basic and acidic residues.

This sequence belongs to the prokaryotic/mitochondrial release factor family. Post-translationally, methylated by PrmC. Methylation increases the termination efficiency of RF1.

It is found in the cytoplasm. In terms of biological role, peptide chain release factor 1 directs the termination of translation in response to the peptide chain termination codons UAG and UAA. The sequence is that of Peptide chain release factor 1 from Streptococcus sanguinis (strain SK36).